The following is a 20-amino-acid chain: Short cationic peptide-4b (20 aa).

Glutamate 20 is subject to Glutamic acid 1-amide.

Expressed by the venom gland.

The protein resides in the secreted. In Cupiennius salei (American wandering spider), this protein is Short cationic peptide-4b.